We begin with the raw amino-acid sequence, 160 residues long: Monooxygenase AacuO (160 aa).

The protein belongs to the avfA family.

It participates in secondary metabolite biosynthesis. In terms of biological role, monooxygenase; part of the gene cluster that mediates the biosynthesis of the tetrahydroxanthone dimer secalonic acid D. The pathway begins with the synthesis of atrochrysone thioester by the polyketide synthase AacuL. The atrochrysone carboxyl ACP thioesterase AacuM then breaks the thioester bond and releases the atrochrysone carboxylic acid from AacuL. Atrochrysone carboxylic acid is decarboxylated by the decarboxylase AacuI, and oxidized by the anthrone oxygenase AacuG to yield emodin. Emodin is then reduced to emodin hydroquinone by a yet unidentified oxidoreductase. A-ring reduction by the short chain dehydrogenase AacuN, dehydration by the scytalone dehydratase-like protein AacuK and probable spontaneous re-oxidation, results in overall deoxygenation to chrysophanol. Baeyer-Villiger oxidation by the Baeyer-Villiger monooxygenase (BVMO) AacuH then yields monodictyphenone. Monodictyphenone is transformed into compounds with the tetrahydroxanthone skeleton via methylesterification by the methyltransferase AacuQ, followed by the action of the flavin-dependent monooxygenase AacuC, the isomerase AacuP, and the short chain dehydrogenase/reductase AacuF or AacuD. AacuF and AacuD should accept the same compound as a substrate but perform the ketoreduction with a different stereoselectivity, thus yielding blennolides B and A, respectively. In the final step of the biosynthesis, the cytochrome P450 monooxygenase AacuE accepts blennolide B and/or blennolide A to conduct the dimerization reaction to furnish the tetrahydroxanthone dimers, secalonic acids D, B, and F. The sequence is that of Monooxygenase AacuO from Aspergillus aculeatus (strain ATCC 16872 / CBS 172.66 / WB 5094).